The primary structure comprises 538 residues: Cytochrome P450 monooxygenase claM (538 aa).

The helical transmembrane segment at 36-56 threads the bilayer; that stretch reads LSIGLVVLIGAISSFLLQQFL. N-linked (GlcNAc...) asparagine glycosylation is found at Asn306 and Asn425. Cys472 is a heme binding site.

It belongs to the cytochrome P450 family. It depends on heme as a cofactor.

Its subcellular location is the membrane. It carries out the reaction 2 nataloe emodin + reduced [NADPH--hemoprotein reductase] + O2 = cladofulvin + oxidized [NADPH--hemoprotein reductase] + 2 H2O + H(+). The protein operates within pigment biosynthesis. Functionally, cytochrome P450 monooxygenase; part of the gene cluster that mediates the biosynthesis of the bianthraquinone cladofulvin, a conidial pigment not required for virulence but that plays a role in fitness and resistance to environmental stresses including UV light and low-temperature stress. The pathway begins with the synthesis of atrochrysone thioester by the polyketide synthase (PKS) claG. The atrochrysone carboxyl ACP thioesterase claF then breaks the thioester bond and releases the atrochrysone carboxylic acid from claG. This compound is decarboxylated by claH to yield emodin, which is further converted to chrysophanol hydroquinone by the reductase claC and the dehydratase claB. The cytochrome monooxygenase P450 claM then catalyzes the dimerization of nataloe-emodin to cladofulvin. In Passalora fulva (Tomato leaf mold), this protein is Cytochrome P450 monooxygenase claM.